A 1564-amino-acid chain; its full sequence is ATP-dependent permease PDR10 (1564 aa).

Residues 1–16 (MLQAPSSSNSGLNQGN) show a composition bias toward polar residues. The disordered stretch occupies residues 1-37 (MLQAPSSSNSGLNQGNAAPDGPPNETQPYEGLDAAAQ). Over 1-587 (MLQAPSSSNS…AAIFFAILFN (587 aa)) the chain is Cytoplasmic. An ABC transporter 1 domain is found at 174–430 (ISRRLFHRTH…FQRMGYVCPE (257 aa)). 5 consecutive transmembrane segments (helical) span residues 588–608 (AFSSLLEIFSLYETRPITEKH), 624–644 (TFSDVPTKLATAVTFNIPYYF), 674–694 (RCIGSVSKTLPQAMVPASVLL), 699–719 (MYTGFAIPRVQMLGWSKWISY), and 732–752 (INEFHGRNFPCAQYIPSGPNY). N754 carries N-linked (GlcNAc...) asparagine glycosylation. Basic residues predominate over residues 839–849 (KGIVSEKKKKN). The disordered stretch occupies residues 839–872 (KGIVSEKKKKNQPTLSTSDAEKDVEMNNNSSATD). The chain crosses the membrane as a helical span at residues 841–861 (IVSEKKKKNQPTLSTSDAEKD). The Cytoplasmic segment spans residues 862–1304 (VEMNNNSSAT…IFMFTVVFNP (443 aa)). The ABC transporter 2 domain occupies 923-1166 (FHWKNLCYDI…MINYFEAHGA (244 aa)). 959–966 (GASGAGKT) lines the ATP pocket. 6 consecutive transmembrane segments (helical) span residues 1305 to 1325 (ILQQYLPLFVQQRELYEARER), 1340 to 1360 (ILVEIPWNLLAGTIAFFVYYY), 1390 to 1410 (VYISSMGVLVISCIEIAENAA), 1426 to 1446 (VLATPNILPRFWIFMYRVSPL), 1459 to 1479 (ANASVVCSSNELLKIVPPSGM), and 1491 to 1511 (STGTGYLLDGSSETECHFCQF). Residues 1512–1564 (SSTNDYLATVSSSYSRRWMNYGIFSAYIVFDYCAAIFLYWLVRVPKKSKKLKK) are Cytoplasmic-facing.

This sequence belongs to the ABC transporter superfamily. ABCG family. PDR (TC 3.A.1.205) subfamily.

Its subcellular location is the membrane. The sequence is that of ATP-dependent permease PDR10 (PDR10) from Saccharomyces cerevisiae (strain ATCC 204508 / S288c) (Baker's yeast).